The following is a 754-amino-acid chain: Condensin complex subunit 2 (754 aa).

The tract at residues 104–149 is disordered; that stretch reads LAQRKTNGASNGDDSNGGNGEGLGGDSDEANIEIDPLTGMPISNDP. A compositionally biased stretch (gly residues) spans 118–128; sequence SNGGNGEGLGG. A Phosphoserine modification is found at Ser-245. The disordered stretch occupies residues 359-379; that stretch reads CYPDENHDNTSHDEQDDDNVN. Over residues 362-371 the composition is skewed to basic and acidic residues; it reads DENHDNTSHD. A Phosphoserine modification is found at Ser-548. The interval 665 to 688 is disordered; sequence HDSRKNREQSSNDSETHTEDESTK.

This sequence belongs to the CND2 (condensin subunit 2) family. Component of the condensin complex, which contains the SMC2 and SMC4 heterodimer, and three non SMC subunits that probably regulate the complex: BRN1, YCS4 and YCG1/YCS5.

Its subcellular location is the nucleus. It localises to the cytoplasm. It is found in the chromosome. In terms of biological role, regulatory subunit of the condensin complex, a complex required for conversion of interphase chromatin into mitotic-like condense chromosomes. The condensin complex probably introduces positive supercoils into relaxed DNA in the presence of type I topoisomerases and converts nicked DNA into positive knotted forms in the presence of type II topoisomerases. The condensin complex probably also plays a role during interphase. This chain is Condensin complex subunit 2 (BRN1), found in Saccharomyces cerevisiae (strain ATCC 204508 / S288c) (Baker's yeast).